The sequence spans 175 residues: Bifunctional protein PyrR (175 aa).

Positions 98 to 110 (VIIIDDVLYTGRT) match the PRPP-binding motif.

The protein belongs to the purine/pyrimidine phosphoribosyltransferase family. PyrR subfamily. In terms of assembly, homodimer and homohexamer; in equilibrium.

The catalysed reaction is UMP + diphosphate = 5-phospho-alpha-D-ribose 1-diphosphate + uracil. Functionally, regulates transcriptional attenuation of the pyrimidine nucleotide (pyr) operon by binding in a uridine-dependent manner to specific sites on pyr mRNA. This disrupts an antiterminator hairpin in the RNA and favors formation of a downstream transcription terminator, leading to a reduced expression of downstream genes. Its function is as follows. Also displays a weak uracil phosphoribosyltransferase activity which is not physiologically significant. In Staphylococcus carnosus (strain TM300), this protein is Bifunctional protein PyrR.